The following is a 412-amino-acid chain: tRNA pseudouridine synthase Pus10 (412 aa).

The region spanning 73 to 197 (HEPSIKFLSN…TGSVEVQIMP (125 aa)) is the THUMP domain. 2 residues coordinate substrate: tyrosine 308 and tyrosine 376.

Belongs to the pseudouridine synthase Pus10 family.

The catalysed reaction is uridine(54) in tRNA = pseudouridine(54) in tRNA. The enzyme catalyses uridine(55) in tRNA = pseudouridine(55) in tRNA. In terms of biological role, responsible for synthesis of pseudouridine from uracil-54 and uracil-55 in the psi GC loop of transfer RNAs. This chain is tRNA pseudouridine synthase Pus10, found in Vulcanisaeta distributa (strain DSM 14429 / JCM 11212 / NBRC 100878 / IC-017).